A 1116-amino-acid polypeptide reads, in one-letter code: Angiopoietin-1 receptor (1116 aa).

The first 21 residues, 1 to 21, serve as a signal peptide directing secretion; sequence MCLLDSCTALLLLGCWMSGSA. The Extracellular portion of the chain corresponds to 22–745; the sequence is VRISDVTLVN…FAAHGHLLLY (724 aa). Cys-46 and Cys-106 are disulfide-bonded. The Ig-like C2-type 1 domain occupies 46–126; the sequence is CVSSDWSSGG…YTYKMLQEAA (81 aa). Residues Asn-110, Asn-143, and Asn-223 are each glycosylated (N-linked (GlcNAc...) asparagine). 3 EGF-like domains span residues 214 to 256, 258 to 302, and 304 to 342; these read SCRA…HTCD, VCGE…LSCN, and ACPD…SRCE. Cystine bridges form between Cys-215/Cys-224, Cys-228/Cys-237, Cys-231/Cys-244, Cys-246/Cys-255, Cys-259/Cys-268, Cys-272/Cys-277, Cys-283/Cys-290, Cys-292/Cys-301, Cys-305/Cys-314, Cys-318/Cys-325, Cys-320/Cys-331, and Cys-333/Cys-341. An Ig-like C2-type 2 domain is found at 348–438; it reads PVISHLRDVE…MQVEDEFTVE (91 aa). 3 N-linked (GlcNAc...) asparagine glycosylation sites follow: Asn-367, Asn-387, and Asn-425. Cys-368 and Cys-422 are disulfide-bonded. Fibronectin type-III domains are found at residues 444 to 538, 540 to 633, and 634 to 729; these read RPQN…TQVL, LPVG…QLPP, and PPAN…TLPQ. N-linked (GlcNAc...) asparagine glycosylation is found at Asn-590, Asn-637, and Asn-642. Residues 746 to 766 form a helical membrane-spanning segment; it reads AILGSAGMTCCTVLLAFCIVL. At 767–1116 the chain is on the cytoplasmic side; sequence QLKRNTLQRR…GIDCSAEEAG (350 aa). The Protein kinase domain maps to 816 to 1095; that stretch reads IQFQDVLGEG…RMLEERKTYV (280 aa). ATP is bound by residues 822-830 and Lys-847; that span reads LGEGNFGQV. Tyr-852 is subject to Phosphotyrosine; by autocatalysis. The active-site Proton acceptor is Asp-956. 3 positions are modified to phosphotyrosine; by autocatalysis: Tyr-984, Tyr-1094, and Tyr-1100.

This sequence belongs to the protein kinase superfamily. Tyr protein kinase family. Tie subfamily. As to quaternary structure, interacts with svep1. Autophosphorylated on tyrosine residues in response to ligand binding. Autophosphorylation occurs in trans, i.e. one subunit of the dimeric receptor phosphorylates tyrosine residues on the other subunit. Autophosphorylation occurs in a sequential manner, where Tyr-984 in the kinase activation loop is phosphorylated first, followed by autophosphorylation at additional tyrosine residues. Phosphorylation is important for interaction with scaffold proteins and effectors.

The protein localises to the cell membrane. It is found in the cell junction. Its subcellular location is the focal adhesion. It localises to the cytoplasm. The protein resides in the cytoskeleton. The enzyme catalyses L-tyrosyl-[protein] + ATP = O-phospho-L-tyrosyl-[protein] + ADP + H(+). With respect to regulation, angiopoietin binding leads to receptor dimerization and activation by autophosphorylation at Tyr-984 on the kinase activation loop. Its function is as follows. Tyrosine-protein kinase that acts as a cell-surface receptor for angiopoietins and regulates angiogenesis, endothelial cell survival, proliferation, migration, adhesion and cell spreading, reorganization of the actin cytoskeleton, but also maintenance of vascular quiescence. Can activate or inhibit angiogenesis, depending on the context. Angiopoietin signaling triggers receptor dimerization and autophosphorylation at specific tyrosine residues that then serve as binding sites for scaffold proteins and effectors. The polypeptide is Angiopoietin-1 receptor (Danio rerio (Zebrafish)).